The primary structure comprises 213 residues: ATP-dependent Clp protease proteolytic subunit (213 aa).

The active-site Nucleophile is Ser-114. The active site involves His-139.

It belongs to the peptidase S14 family. As to quaternary structure, fourteen ClpP subunits assemble into 2 heptameric rings which stack back to back to give a disk-like structure with a central cavity, resembling the structure of eukaryotic proteasomes.

It is found in the cytoplasm. It carries out the reaction Hydrolysis of proteins to small peptides in the presence of ATP and magnesium. alpha-casein is the usual test substrate. In the absence of ATP, only oligopeptides shorter than five residues are hydrolyzed (such as succinyl-Leu-Tyr-|-NHMec, and Leu-Tyr-Leu-|-Tyr-Trp, in which cleavage of the -Tyr-|-Leu- and -Tyr-|-Trp bonds also occurs).. Cleaves peptides in various proteins in a process that requires ATP hydrolysis. Has a chymotrypsin-like activity. Plays a major role in the degradation of misfolded proteins. In Ectopseudomonas mendocina (strain ymp) (Pseudomonas mendocina), this protein is ATP-dependent Clp protease proteolytic subunit.